The chain runs to 224 residues: Urease accessory protein UreF (224 aa).

Belongs to the UreF family. UreD, UreF and UreG form a complex that acts as a GTP-hydrolysis-dependent molecular chaperone, activating the urease apoprotein by helping to assemble the nickel containing metallocenter of UreC. The UreE protein probably delivers the nickel.

The protein resides in the cytoplasm. Required for maturation of urease via the functional incorporation of the urease nickel metallocenter. The protein is Urease accessory protein UreF of Methylorubrum populi (strain ATCC BAA-705 / NCIMB 13946 / BJ001) (Methylobacterium populi).